Consider the following 716-residue polypeptide: Leucine-rich repeat neuronal protein 1 (716 aa).

Positions 1 to 25 are cleaved as a signal peptide; the sequence is MARMSFVIAACQLVLGLLMTSLTES. In terms of domain architecture, LRRNT spans 26–72; it reads SIQNSECPQLCVCEIRPWFTPQSTYREATTVDCNDLRLTRIPSNLSS. Topologically, residues 26–631 are extracellular; the sequence is SIQNSECPQL…DISDQETSTA (606 aa). LRR repeat units lie at residues 73 to 95, 96 to 117, 120 to 141, 144 to 165, 168 to 189, 192 to 213, 216 to 237, 240 to 261, 264 to 285, 313 to 335, and 338 to 359; these read DTQV…QQLF, NLTE…GLAN, QLTT…CLQD, NLQE…AFAG, NLLR…WFDS, NLEI…NFKP, NLRS…ALVG, SLES…ALQK, NLKF…DFKN, ELTK…AFRS, and ALES…TVES. N-linked (GlcNAc...) asparagine glycans are attached at residues N96 and N117. The LRRCT domain maps to 371 to 424; that stretch reads NPLRCDCVIHWINSNKTNIRFMEPLSMFCAMPPEYKGHQVKEVLIQDSSEQCLP. Residue N385 is glycosylated (N-linked (GlcNAc...) asparagine). The region spanning 424–515 is the Ig-like C2-type domain; that stretch reads PMISHDSFPN…GADTRVATIK (92 aa). An intrachain disulfide couples C447 to C499. N-linked (GlcNAc...) asparagine glycosylation is present at N517. Residues 525 to 617 enclose the Fibronectin type-III domain; the sequence is QVLKIYVKQT…SCVNVTTKNA (93 aa). A helical membrane pass occupies residues 632-652; it reads LAAVMGSMFAVISLASIAVYF. Residues 653–716 lie on the Cytoplasmic side of the membrane; it reads AKRFKRKNYH…VDTSRSYYMW (64 aa). Residues 691-700 show a composition bias toward basic and acidic residues; it reads DSEKDKDGSA. Residues 691-716 form a disordered region; sequence DSEKDKDGSADTKPTQVDTSRSYYMW. A compositionally biased stretch (polar residues) spans 702 to 716; it reads TKPTQVDTSRSYYMW.

It is found in the membrane. In Homo sapiens (Human), this protein is Leucine-rich repeat neuronal protein 1 (LRRN1).